The primary structure comprises 213 residues: Motile sperm domain-containing protein 1 (213 aa).

The MSP domain maps to P16–F143. Transmembrane regions (helical) follow at residues S159–G179 and L191–L211. The Nuclear export signal motif lies at L205–M208.

It is found in the endoplasmic reticulum membrane. The protein resides in the golgi apparatus membrane. Functionally, plays a role in differentiation and/or proliferation of mesenchymal stem cells. Proposed to be involved in epithelial-to-mesenchymal transition (EMT). However, another study suggests that it is not required for EMT or stem cell self-renewal and acts during later stages of differentiation. This chain is Motile sperm domain-containing protein 1 (MOSPD1), found in Pongo abelii (Sumatran orangutan).